The following is a 2269-amino-acid chain: Neuron navigator 3 (2269 aa).

The Calponin-homology (CH) domain maps to 55–162 (SKICKIYTDW…LFFILSRYKQ (108 aa)). The span at 186-207 (TGAAQLSQHKTQDMQSSLTARY) shows a compositional bias: polar residues. Disordered stretches follow at residues 186 to 358 (TGAA…RSML) and 388 to 532 (SEFG…NKGS). Residues 236–252 (GSGSNSSKGSSNLNRRS) show a composition bias toward low complexity. Composition is skewed to polar residues over residues 267 to 291 (ASGNDRGSMNGSGSVPSSTSGQQLA) and 305 to 319 (SKSMNMKHSATSSML). The span at 323-333 (PPSPTSSPTPP) shows a compositional bias: pro residues. Residues 346–356 (ASKSAPGNQRS) show a composition bias toward polar residues. The segment covering 411–432 (PSASAFAPPSKSNNCKNHNNKS) has biased composition (low complexity). The span at 505–518 (TATSKPAGTQSCVP) shows a compositional bias: polar residues. Positions 644-672 (ETRRMRTVKNIADLRQNLEETMSSLRGTQ) form a coiled coil. Disordered stretches follow at residues 692 to 737 (GRGL…STTV), 756 to 776 (ASGARGAEPGEKGGISEVGPE), 836 to 1036 (VKEM…IPGP), 1050 to 1079 (SGSATLGKVPKSACIGKSTGISNGRKTSLD), 1097 to 1412 (VPLQ…GTTC), and 1461 to 1487 (GGSATSLEERPRGMSRSGSFRDSTDEV). Polar residues-rich tracts occupy residues 699–716 (SSRSSPMSWRLGQGSSPR) and 727–737 (PPRSSAGSTTV). A compositionally biased stretch (low complexity) spans 847–860 (DSSSVSSGLSDTLD). Residues 874–886 (GISSRKSKAAQSN) are compositionally biased toward polar residues. Residues 919–932 (PSCKWKTSSPSSSC) are compositionally biased toward low complexity. The span at 939-950 (QKTGLPMSQTGS) shows a compositional bias: polar residues. The segment covering 977–989 (GKTDDAKASEKGK) has biased composition (basic and acidic residues). Over residues 1110–1137 (SSSGGSSVVSRSGHRSSSSSIDSNVSGK) the composition is skewed to low complexity. Polar residues predominate over residues 1163–1172 (GRSSPVTINQ). Composition is skewed to low complexity over residues 1185-1202 (GTGLPTSPKSSPTSTQSG) and 1223-1234 (GSKASSKPSSPG). Residues 1266–1276 (GSLGSMGGQSG) show a composition bias toward gly residues. Over residues 1292-1305 (SPASSPASGLSLPS) the composition is skewed to low complexity. Polar residues-rich tracts occupy residues 1313-1339 (NLSSSSAGSKDTLSCHSMTSLHTSSES) and 1354-1363 (RTGSVKSTLS). A compositionally biased stretch (basic and acidic residues) spans 1381–1391 (TSHEEGKEWLR). Residues 1392–1412 (SHSTGGLQDTGSPLSPPGTTC) are compositionally biased toward polar residues. The stretch at 1499 to 1586 (SSLYSAQIRK…TDAQTAIQVA (88 aa)) forms a coiled coil. Disordered regions lie at residues 1602–1672 (QHSS…PSSP), 1756–1792 (NDRLKSSGNTTPAATPAKTARPPSETSSTSSSSSRQS), and 2207–2269 (GYSS…ESAL). Low complexity-rich tracts occupy residues 1605–1623 (SESMSSINSAASHSSLGSA) and 1765–1792 (TTPAATPAKTARPPSETSSTSSSSSRQS). Positions 1697-1765 (CECTEAEAEI…NDRLKSSGNT (69 aa)) form a coiled coil. Positions 2208 to 2224 (YSSSKDGAASKQVSQSD) are enriched in polar residues.

It belongs to the Nav/unc-53 family. Interacts with F-actin.

It localises to the nucleus outer membrane. The protein localises to the golgi apparatus. It is found in the cell projection. The protein resides in the lamellipodium. Its subcellular location is the filopodium. Functionally, involved in liver and heart organogenesis during embryo development. Plays a role in the migration of hepatoblasts from the intestinal endoderm during liver organogenesis; possibly by modulating actin polymerization during hepatoblast outgrowth. May be involved in neuron regeneration. In Danio rerio (Zebrafish), this protein is Neuron navigator 3 (nav3).